The sequence spans 244 residues: Flavin-dependent thymidylate synthase (244 aa).

A ThyX domain is found at 2–207 (VRVTLVNYTK…DIRPIIKWAK (206 aa)). FAD is bound by residues Ser56, 80-82 (RHR), and Gln88. Residues 77-80 (QLVR), 88-92 (QQSQR), and Arg146 each bind dUMP. Residues 80-90 (RHRIASYTQQS) carry the ThyX motif motif. FAD contacts are provided by residues 162-164 (NLR) and His168. Arg173 contributes to the dUMP binding site. Arg173 functions as the Involved in ionization of N3 of dUMP, leading to its activation in the catalytic mechanism.

It belongs to the thymidylate synthase ThyX family. Homotetramer. FAD serves as cofactor.

It carries out the reaction dUMP + (6R)-5,10-methylene-5,6,7,8-tetrahydrofolate + NADPH + H(+) = dTMP + (6S)-5,6,7,8-tetrahydrofolate + NADP(+). It participates in pyrimidine metabolism; dTTP biosynthesis. Its function is as follows. Catalyzes the reductive methylation of 2'-deoxyuridine-5'-monophosphate (dUMP) to 2'-deoxythymidine-5'-monophosphate (dTMP) while utilizing 5,10-methylenetetrahydrofolate (mTHF) as the methyl donor, and NADPH and FADH(2) as the reductant. The polypeptide is Flavin-dependent thymidylate synthase (Pyrococcus furiosus (strain ATCC 43587 / DSM 3638 / JCM 8422 / Vc1)).